Here is a 264-residue protein sequence, read N- to C-terminus: Enhancer of mRNA-decapping protein 1 (264 aa).

2 disordered regions span residues 1–180 (MLAQ…FSTI) and 193–264 (YNNP…LRDY). Residues 63 to 74 (GKKSTSKPKSKS) are compositionally biased toward basic residues. Residues 83–92 (NFKLTASPSL) show a composition bias toward polar residues. Positions 108-118 (PSPPPPPPPST) are enriched in pro residues. Composition is skewed to low complexity over residues 119–134 (QPSTSTSTSPTPRTST), 161–172 (NGKKPNFFNNNN), and 208–226 (NNNNNNSSNNSNNSNNSNS). The span at 248–264 (FKSNNGSPRQSSGLRDY) shows a compositional bias: polar residues.

This sequence belongs to the EDC family.

The protein localises to the cytoplasm. Functionally, mRNA-binding protein which stimulates mRNA decapping. This chain is Enhancer of mRNA-decapping protein 1 (EDC1), found in Candida albicans (strain SC5314 / ATCC MYA-2876) (Yeast).